The following is a 184-amino-acid chain: ATP synthase subunit b, chloroplastic (184 aa).

A helical transmembrane segment spans residues 27-49 (LATNPINLSVVLGVLIFFGKGVL).

This sequence belongs to the ATPase B chain family. F-type ATPases have 2 components, F(1) - the catalytic core - and F(0) - the membrane proton channel. F(1) has five subunits: alpha(3), beta(3), gamma(1), delta(1), epsilon(1). F(0) has four main subunits: a(1), b(1), b'(1) and c(10-14). The alpha and beta chains form an alternating ring which encloses part of the gamma chain. F(1) is attached to F(0) by a central stalk formed by the gamma and epsilon chains, while a peripheral stalk is formed by the delta, b and b' chains.

It is found in the plastid. The protein localises to the chloroplast thylakoid membrane. In terms of biological role, f(1)F(0) ATP synthase produces ATP from ADP in the presence of a proton or sodium gradient. F-type ATPases consist of two structural domains, F(1) containing the extramembraneous catalytic core and F(0) containing the membrane proton channel, linked together by a central stalk and a peripheral stalk. During catalysis, ATP synthesis in the catalytic domain of F(1) is coupled via a rotary mechanism of the central stalk subunits to proton translocation. Its function is as follows. Component of the F(0) channel, it forms part of the peripheral stalk, linking F(1) to F(0). The sequence is that of ATP synthase subunit b, chloroplastic from Populus alba (White poplar).